A 228-amino-acid polypeptide reads, in one-letter code: Ribose-5-phosphate isomerase A (228 aa).

Residues 32–35, 85–88, and 98–101 contribute to the substrate site; these read TGST, DGAD, and KGGG. Glutamate 107 (proton acceptor) is an active-site residue. Lysine 125 contacts substrate.

It belongs to the ribose 5-phosphate isomerase family. Homodimer.

It catalyses the reaction aldehydo-D-ribose 5-phosphate = D-ribulose 5-phosphate. It functions in the pathway carbohydrate degradation; pentose phosphate pathway; D-ribose 5-phosphate from D-ribulose 5-phosphate (non-oxidative stage): step 1/1. Functionally, catalyzes the reversible conversion of ribose-5-phosphate to ribulose 5-phosphate. In Cupriavidus necator (strain ATCC 17699 / DSM 428 / KCTC 22496 / NCIMB 10442 / H16 / Stanier 337) (Ralstonia eutropha), this protein is Ribose-5-phosphate isomerase A.